The primary structure comprises 316 residues: 4-hydroxyphenylacetate decarboxylase activating enzyme (316 aa).

Residues 20–307 (HDGPGCRTTV…QDIFLDNGIA (288 aa)) enclose the Radical SAM core domain. Residues Cys34, Cys38, Cys41, Cys60, Cys66, Cys69, and Cys105 each contribute to the [4Fe-4S] cluster site. 40-42 (WCA) serves as a coordination point for S-adenosyl-L-methionine. The 32-residue stretch at 84–115 (NKPVIDWNICKDCESFECVNSCYYNAFKLCAK) folds into the 4Fe-4S ferredoxin-type domain. S-adenosyl-L-methionine contacts are provided by residues Gly144, 193 to 195 (DIK), and His267.

Belongs to the organic radical-activating enzymes family. As to quaternary structure, monomer. [4Fe-4S] cluster is required as a cofactor.

It carries out the reaction glycyl-[protein] + reduced [flavodoxin] + S-adenosyl-L-methionine = glycin-2-yl radical-[protein] + semiquinone [flavodoxin] + 5'-deoxyadenosine + L-methionine + H(+). Catalyzes activation of 4-hydroxyphenylacetate decarboxylase under anaerobic conditions by generation of an organic free radical on a glycine residue, via a homolytic cleavage of S-adenosyl-L-methionine (SAM). This chain is 4-hydroxyphenylacetate decarboxylase activating enzyme, found in Clostridioides difficile (Peptoclostridium difficile).